The following is a 356-amino-acid chain: Testis-expressed protein 19.1 (356 aa).

The tract at residues 1–78 (MCPPVSVRHG…WDAEPMEHLS (78 aa)) is interaction with LIRE1. A compositionally biased stretch (acidic residues) spans 59–72 (LSEEEEEEEVWDAE). The interval 59–107 (LSEEEEEEEVWDAEPMEHLSESESLESDSKQDAGSEQDAGSEPNTRSEQ) is disordered. Basic and acidic residues predominate over residues 73 to 91 (PMEHLSESESLESDSKQDA). The important for interaction with piRNA stretch occupies residues 139–186 (QWVVFSISVPTELLPQEAVPLDLGPEDVEWTQALPWRLDVLFPCSHRL).

As to quaternary structure, interacts with UBR2; does not lead to Tex19.1 degradation and stabilizes it. Interacts with piRNA-associated proteins DDX4, EDC4, MAEL, PIWIL1, PIWIL2, RANBP9 and TDRD6. Interacts with L1RE1.

Its subcellular location is the cytoplasm. Functionally, required during spermatogenesis and placenta development, participating in the repression of retrotransposable elements and prevent their mobilization. Collaborates with the Piwi-interacting RNA (piRNA) pathway, which mediates the repression of transposable elements during meiosis by forming complexes composed of piRNAs and Piwi proteins. Interacts with Piwi proteins and directly binds piRNAs, a class of 24 to 30 nucleotide RNAs that are generated by a Dicer-independent mechanism and are primarily derived from transposons and other repeated sequence elements. Also during spermatogenesis, promotes, with UBR2, SPO11-dependent recombination foci to accumulate and drive robust homologous chromosome synapsis. Interacts with LINE-1 retrotransposon encoded LIRE1, stimulates LIRE1 polyubiquitination, mediated by UBR2, and degradation, inhibiting LINE-1 retrotransposon mobilization. The polypeptide is Testis-expressed protein 19.1 (Tex19.1) (Rattus norvegicus (Rat)).